The sequence spans 92 residues: UPF0213 protein H16_B0156 (92 aa).

Positions 5-80 constitute a GIY-YIG domain; the sequence is SAWYLYLLEC…KRLSSTQKRA (76 aa).

It belongs to the UPF0213 family.

This chain is UPF0213 protein H16_B0156, found in Cupriavidus necator (strain ATCC 17699 / DSM 428 / KCTC 22496 / NCIMB 10442 / H16 / Stanier 337) (Ralstonia eutropha).